Here is a 309-residue protein sequence, read N- to C-terminus: Coproporphyrin III ferrochelatase (309 aa).

Residues Y12, R29, 45 to 46 (RY), S53, and Y124 contribute to the Fe-coproporphyrin III site. 2 residues coordinate Fe(2+): H182 and E263.

The protein belongs to the ferrochelatase family.

It is found in the cytoplasm. It carries out the reaction Fe-coproporphyrin III + 2 H(+) = coproporphyrin III + Fe(2+). Its pathway is porphyrin-containing compound metabolism; protoheme biosynthesis. Its function is as follows. Involved in coproporphyrin-dependent heme b biosynthesis. Catalyzes the insertion of ferrous iron into coproporphyrin III to form Fe-coproporphyrin III. This chain is Coproporphyrin III ferrochelatase, found in Listeria innocua serovar 6a (strain ATCC BAA-680 / CLIP 11262).